The following is a 229-amino-acid chain: Ferric nitrobindin-like protein (229 aa).

The disordered stretch occupies residues 1–54; sequence MSENSTPNNPVVPGAGADGPSLSDSASISGSDAVNLAAEQSKSTAHRNIPGLGD. The span at 18-33 shows a compositional bias: low complexity; sequence DGPSLSDSASISGSDA. Positions 82-88 match the GXWXGXG motif; sequence GVWRGEG.

It belongs to the nitrobindin family.

This chain is Ferric nitrobindin-like protein, found in Corynebacterium glutamicum (strain R).